We begin with the raw amino-acid sequence, 379 residues long: Lipid-A-disaccharide synthase (379 aa).

Belongs to the LpxB family.

The catalysed reaction is a lipid X + a UDP-2-N,3-O-bis[(3R)-3-hydroxyacyl]-alpha-D-glucosamine = a lipid A disaccharide + UDP + H(+). It participates in bacterial outer membrane biogenesis; LPS lipid A biosynthesis. In terms of biological role, condensation of UDP-2,3-diacylglucosamine and 2,3-diacylglucosamine-1-phosphate to form lipid A disaccharide, a precursor of lipid A, a phosphorylated glycolipid that anchors the lipopolysaccharide to the outer membrane of the cell. The sequence is that of Lipid-A-disaccharide synthase from Idiomarina loihiensis (strain ATCC BAA-735 / DSM 15497 / L2-TR).